A 731-amino-acid polypeptide reads, in one-letter code: Zinc finger protein 615 (731 aa).

The 72-residue stretch at 8–79 (LTLEDVAVDF…EDEIYSRICS (72 aa)) folds into the KRAB domain. 19 consecutive C2H2-type zinc fingers follow at residues 204–226 (HVCS…QRVH), 232–254 (HVCS…QRTH), 260–282 (YECT…QKTH), 288–310 (YTCS…QRTH), 316–338 (HGCS…QKTH), 344–366 (YICS…HRTH), 372–394 (FICN…QQTH), 400–422 (YTCS…QRTH), 428–450 (YKCN…QRTH), 456–478 (YVCT…QRTH), 484–506 (YICN…QRTH), 512–534 (YVCG…QRTH), 540–562 (YICN…RRTH), 568–590 (YVCS…QRTH), 596–618 (YICN…QQTH), 624–646 (YKCN…QRFH), 652–674 (FACT…QRIH), 680–702 (YKCS…QRKH), and 708–730 (YGCS…RRIH).

It belongs to the krueppel C2H2-type zinc-finger protein family.

Its subcellular location is the nucleus. May be involved in transcriptional regulation. This is Zinc finger protein 615 (ZNF615) from Homo sapiens (Human).